The sequence spans 241 residues: Probable porphobilinogen deaminase (241 aa).

The protein belongs to the HMBS family.

The catalysed reaction is 4 porphobilinogen + H2O = hydroxymethylbilane + 4 NH4(+). It functions in the pathway porphyrin-containing compound metabolism; protoporphyrin-IX biosynthesis; coproporphyrinogen-III from 5-aminolevulinate: step 2/4. Tetrapolymerization of the monopyrrole PBG into the hydroxymethylbilane pre-uroporphyrinogen in several discrete steps. This chain is Probable porphobilinogen deaminase (hemC), found in Chlamydia trachomatis serovar D (strain ATCC VR-885 / DSM 19411 / UW-3/Cx).